The chain runs to 333 residues: 4-hydroxy-3-methylbut-2-enyl diphosphate reductase (333 aa).

Residue Cys-33 coordinates [4Fe-4S] cluster. (2E)-4-hydroxy-3-methylbut-2-enyl diphosphate is bound by residues His-62 and His-95. Dimethylallyl diphosphate is bound by residues His-62 and His-95. Isopentenyl diphosphate contacts are provided by His-62 and His-95. Cys-117 contacts [4Fe-4S] cluster. Residue His-145 participates in (2E)-4-hydroxy-3-methylbut-2-enyl diphosphate binding. His-145 is a dimethylallyl diphosphate binding site. Residue His-145 participates in isopentenyl diphosphate binding. Catalysis depends on Glu-147, which acts as the Proton donor. Position 186 (Thr-186) interacts with (2E)-4-hydroxy-3-methylbut-2-enyl diphosphate. Cys-216 contributes to the [4Fe-4S] cluster binding site. Ser-244, Ser-245, Asn-246, and Ser-289 together coordinate (2E)-4-hydroxy-3-methylbut-2-enyl diphosphate. Dimethylallyl diphosphate-binding residues include Ser-244, Ser-245, Asn-246, and Ser-289. 4 residues coordinate isopentenyl diphosphate: Ser-244, Ser-245, Asn-246, and Ser-289.

The protein belongs to the IspH family. Requires [4Fe-4S] cluster as cofactor.

The catalysed reaction is isopentenyl diphosphate + 2 oxidized [2Fe-2S]-[ferredoxin] + H2O = (2E)-4-hydroxy-3-methylbut-2-enyl diphosphate + 2 reduced [2Fe-2S]-[ferredoxin] + 2 H(+). The enzyme catalyses dimethylallyl diphosphate + 2 oxidized [2Fe-2S]-[ferredoxin] + H2O = (2E)-4-hydroxy-3-methylbut-2-enyl diphosphate + 2 reduced [2Fe-2S]-[ferredoxin] + 2 H(+). The protein operates within isoprenoid biosynthesis; dimethylallyl diphosphate biosynthesis; dimethylallyl diphosphate from (2E)-4-hydroxy-3-methylbutenyl diphosphate: step 1/1. It participates in isoprenoid biosynthesis; isopentenyl diphosphate biosynthesis via DXP pathway; isopentenyl diphosphate from 1-deoxy-D-xylulose 5-phosphate: step 6/6. Functionally, catalyzes the conversion of 1-hydroxy-2-methyl-2-(E)-butenyl 4-diphosphate (HMBPP) into a mixture of isopentenyl diphosphate (IPP) and dimethylallyl diphosphate (DMAPP). Acts in the terminal step of the DOXP/MEP pathway for isoprenoid precursor biosynthesis. In Corynebacterium diphtheriae (strain ATCC 700971 / NCTC 13129 / Biotype gravis), this protein is 4-hydroxy-3-methylbut-2-enyl diphosphate reductase.